Here is a 443-residue protein sequence, read N- to C-terminus: UPF0597 protein Dvul_2496 (443 aa).

The tract at residues 156–178 is disordered; it reads GMERAPEADGTLHGGASCEPSAS.

This sequence belongs to the UPF0597 family.

The sequence is that of UPF0597 protein Dvul_2496 from Nitratidesulfovibrio vulgaris (strain DP4) (Desulfovibrio vulgaris).